A 442-amino-acid polypeptide reads, in one-letter code: MSNISTPQPRIGFVSLGCPKNLVDSERILTELRTEGYQVVPRYDDAELVIVNTCGFIDSAVQESLEAIGEALNENGKVIVTGCLGAKENQIREVHPKVLEITGPHSYEQVLSHVHQYVPKPTHNPFTSLVPEQGVKLTPRHYAYLKISEGCNHRCTFCIIPSMRGDLDSRPIGSVLDEAKRLVNAGVKELLVISQDTSAYGADVKQRTGFWNGQPVKTSMVSLCEQLASLGVWVRLHYVYPYPHVDDVIPLMAEGKILPYLDIPLQHASPKILKLMKRPGAVERTLERIKRWREICPDLTLRSTFIVGFPGETEEDFQMLLDFLKEAKLDRVGCFKFSPVEGAAANELPDQVPEEVKEERFHRFMQLQQAISTQRLQDKIGREVLVLIDEIDEEGAIGRSMADAPEIDGAVYLNGETGVKVGDIVKVKVEHADEYDLWGSRV.

One can recognise an MTTase N-terminal domain in the interval 9 to 119; sequence PRIGFVSLGC…VLSHVHQYVP (111 aa). [4Fe-4S] cluster is bound by residues C18, C54, C83, C151, C155, and C158. The Radical SAM core domain maps to 137 to 375; it reads LTPRHYAYLK…QLQQAISTQR (239 aa). The 66-residue stretch at 377-442 folds into the TRAM domain; sequence QDKIGREVLV…DEYDLWGSRV (66 aa).

The protein belongs to the methylthiotransferase family. RimO subfamily. [4Fe-4S] cluster is required as a cofactor.

The protein localises to the cytoplasm. The enzyme catalyses L-aspartate(89)-[ribosomal protein uS12]-hydrogen + (sulfur carrier)-SH + AH2 + 2 S-adenosyl-L-methionine = 3-methylsulfanyl-L-aspartate(89)-[ribosomal protein uS12]-hydrogen + (sulfur carrier)-H + 5'-deoxyadenosine + L-methionine + A + S-adenosyl-L-homocysteine + 2 H(+). In terms of biological role, catalyzes the methylthiolation of an aspartic acid residue of ribosomal protein uS12. This chain is Ribosomal protein uS12 methylthiotransferase RimO, found in Pectobacterium atrosepticum (strain SCRI 1043 / ATCC BAA-672) (Erwinia carotovora subsp. atroseptica).